We begin with the raw amino-acid sequence, 211 residues long: Transcriptional regulator GfcR (211 aa).

Belongs to the purine/pyrimidine phosphoribosyltransferase family. GfcR subfamily.

This is Transcriptional regulator GfcR from Methanocaldococcus jannaschii (strain ATCC 43067 / DSM 2661 / JAL-1 / JCM 10045 / NBRC 100440) (Methanococcus jannaschii).